Here is a 408-residue protein sequence, read N- to C-terminus: MTSEKPQNESFIQKIKSTSLVSQIIVAIILASLLAVISPESAKAFGMLGSLFVNALKAVAPILVLVLVTSAIANQKMDSSAELKPIVGLYFLGTLSAALVAVLLSFAFPTELTLDLAGATANPPQKLTEVLATLAFKVVENPVTAVASGNFIAVLAWGLGLGFSLKHASESSKGMVHDLSEAISSVVRIVIRFAPLGIFGLVANTIATTGFSALGEYSHLVAVLLSAMLIIALLVNPLIVFIITKKNPYPLVFTCLKESGITAFFTRSSAANIPVNMALCKKLDLHEDTYSVSIPLGATINMAGAAITITVLTLAAAYSLNIEVSFATAILLSVVASISACGASGVAGGSLLLIPLACSLFGINNDVAMQVVAIGFIIGVIQDSAETALNSSTDVVFSAAASHHITKE.

9 consecutive transmembrane segments (helical) span residues 19 to 39 (SLVSQIIVAIILASLLAVISP), 48 to 68 (LGSLFVNALKAVAPILVLVLV), 86 to 106 (IVGLYFLGTLSAALVAVLLSF), 143 to 163 (VTAVASGNFIAVLAWGLGLGF), 193 to 213 (FAPLGIFGLVANTIATTGFSA), 223 to 243 (VLLSAMLIIALLVNPLIVFII), 294 to 314 (IPLGATINMAGAAITITVLTL), 322 to 342 (IEVSFATAILLSVVASISACG), and 367 to 387 (VAMQVVAIGFIIGVIQDSAET).

The protein belongs to the dicarboxylate/amino acid:cation symporter (DAACS) (TC 2.A.23) family.

It localises to the cell inner membrane. The enzyme catalyses L-serine(in) + Na(+)(in) = L-serine(out) + Na(+)(out). The catalysed reaction is L-threonine(in) + Na(+)(in) = L-threonine(out) + Na(+)(out). In terms of biological role, involved in the import of serine and threonine into the cell, with the concomitant import of sodium (symport system). This chain is Serine/threonine transporter SstT, found in Colwellia psychrerythraea (strain 34H / ATCC BAA-681) (Vibrio psychroerythus).